The primary structure comprises 185 residues: Anaphase-promoting complex subunit 10 (185 aa).

Thr2 carries the post-translational modification N-acetylthreonine. One can recognise a DOC domain in the interval 2-185 (TTPNKTPPGA…IDFMMYRSIR (184 aa)). The residue at position 169 (Lys169) is an N6-acetyllysine.

The protein belongs to the APC10 family. As to quaternary structure, the mammalian APC/C is composed at least of 14 distinct subunits ANAPC1, ANAPC2, CDC27/APC3, ANAPC4, ANAPC5, CDC16/APC6, ANAPC7, CDC23/APC8, ANAPC10, ANAPC11, CDC26/APC12, ANAPC13, ANAPC15 and ANAPC16 that assemble into a complex of at least 19 chains with a combined molecular mass of around 1.2 MDa; APC/C interacts with FZR1 and FBXO5. The C-terminus of APC10 binds to CDC27/APC3. Interacts with PIWIL1; interaction only takes place when PIWIL1 binds piRNA. Interacts with FBXO43; the interaction is direct.

Its pathway is protein modification; protein ubiquitination. Functionally, component of the anaphase promoting complex/cyclosome (APC/C), a cell cycle-regulated E3 ubiquitin ligase that controls progression through mitosis and the G1 phase of the cell cycle. The APC/C complex acts by mediating ubiquitination and subsequent degradation of target proteins: it mainly mediates the formation of 'Lys-11'-linked polyubiquitin chains and, to a lower extent, the formation of 'Lys-48'- and 'Lys-63'-linked polyubiquitin chains. The APC/C complex catalyzes assembly of branched 'Lys-11'-/'Lys-48'-linked branched ubiquitin chains on target proteins. In Mus musculus (Mouse), this protein is Anaphase-promoting complex subunit 10 (Anapc10).